We begin with the raw amino-acid sequence, 268 residues long: Phosphatidylglycerol--prolipoprotein diacylglyceryl transferase (268 aa).

7 consecutive transmembrane segments (helical) span residues 10-30 (VALA…LIGI), 56-76 (LVFW…VLFY), 92-112 (WKGG…ALWF), 120-140 (FFEL…AGRI), 174-194 (PSQL…LWLF), 202-222 (MAVS…VEFV), and 236-256 (WLTQ…VLIW). An a 1,2-diacyl-sn-glycero-3-phospho-(1'-sn-glycerol)-binding site is contributed by Arg-139.

This sequence belongs to the Lgt family.

Its subcellular location is the cell inner membrane. It carries out the reaction L-cysteinyl-[prolipoprotein] + a 1,2-diacyl-sn-glycero-3-phospho-(1'-sn-glycerol) = an S-1,2-diacyl-sn-glyceryl-L-cysteinyl-[prolipoprotein] + sn-glycerol 1-phosphate + H(+). The protein operates within protein modification; lipoprotein biosynthesis (diacylglyceryl transfer). Its function is as follows. Catalyzes the transfer of the diacylglyceryl group from phosphatidylglycerol to the sulfhydryl group of the N-terminal cysteine of a prolipoprotein, the first step in the formation of mature lipoproteins. This is Phosphatidylglycerol--prolipoprotein diacylglyceryl transferase from Pseudomonas putida (strain ATCC 47054 / DSM 6125 / CFBP 8728 / NCIMB 11950 / KT2440).